The following is a 186-amino-acid chain: Putative glutathione-dependent formaldehyde-activating enzyme (186 aa).

Residues 20–166 (FSGGKLRCKC…FKSIGLETYD (147 aa)) enclose the CENP-V/GFA domain. The Zn(2+) site is built by C27, C29, C48, C50, C53, C95, and C98.

The protein belongs to the Gfa family. The cofactor is Zn(2+).

The catalysed reaction is S-(hydroxymethyl)glutathione = glutathione + formaldehyde. It functions in the pathway one-carbon metabolism; formaldehyde degradation; formate from formaldehyde (glutathione route): step 1/3. In terms of biological role, catalyzes the condensation of formaldehyde and glutathione to S-hydroxymethylglutathione. In Fusarium vanettenii (strain ATCC MYA-4622 / CBS 123669 / FGSC 9596 / NRRL 45880 / 77-13-4) (Fusarium solani subsp. pisi), this protein is Putative glutathione-dependent formaldehyde-activating enzyme.